A 110-amino-acid chain; its full sequence is G antigen 2E (110 aa).

The segment at 1 to 110 (MSWRGRSTYY…NPEEVKTPEE (110 aa)) is disordered. 2 stretches are compositionally biased toward acidic residues: residues 32–45 (FSDE…EEGE) and 87–96 (ECEDGPDGQE).

It belongs to the GAGE family.

In Homo sapiens (Human), this protein is G antigen 2E (GAGE2E).